The sequence spans 151 residues: Ubiquitin-like protein 4A-B (151 aa).

Residues methionine 1–glutamate 76 form the Ubiquitin-like domain.

In terms of assembly, component of the BAT3 complex.

The protein resides in the cytoplasm. Its subcellular location is the cytosol. Component of the BAT3 complex, a multiprotein complex involved in the post-translational delivery of tail-anchored (TA) membrane proteins to the endoplasmic reticulum membrane. TA membrane proteins, also named type II transmembrane proteins, contain a single C-terminal transmembrane region. The protein is Ubiquitin-like protein 4A-B (ubl4ab) of Oncorhynchus mykiss (Rainbow trout).